A 181-amino-acid polypeptide reads, in one-letter code: MSNTTLHATTIYAVRHNGKAAMAGDGQVTLGQQVIMKQTARKVRRLYEGKVLAGFAGSVADAFTLFEKFETKLQQFSGNLERAAVELAQEWRGDKQLRQLEAMLIVMDKDAILVVSGTGEVIAPDDDLIAIGSGGNYALSAGRALKRHASHLSAEEMAYESLKVAADICVFTNDNIVVETL.

Residue T9 is part of the active site. Positions 166, 169, and 172 each coordinate Na(+).

Belongs to the peptidase T1B family. HslV subfamily. As to quaternary structure, a double ring-shaped homohexamer of HslV is capped on each side by a ring-shaped HslU homohexamer. The assembly of the HslU/HslV complex is dependent on binding of ATP.

The protein resides in the cytoplasm. The enzyme catalyses ATP-dependent cleavage of peptide bonds with broad specificity.. With respect to regulation, allosterically activated by HslU binding. Functionally, protease subunit of a proteasome-like degradation complex believed to be a general protein degrading machinery. This Staphylococcus aureus (strain JH1) protein is ATP-dependent protease subunit HslV.